A 110-amino-acid polypeptide reads, in one-letter code: Suppressor of silencing 2b (110 aa).

The segment at 16–45 (ARMVEAKKQRRRSHKQNRRERGHKSPSERA) is disordered. The Nuclear localization signal signature appears at 22–27 (KKQRRR). Positions 23–37 (KQRRRSHKQNRRERG) are enriched in basic residues.

This sequence belongs to the cucumovirus/ilarvirus protein 2b family. As to quaternary structure, homotetramer. Interacts with host AGO1; this interaction blocks AGO1 cleavage activity to attenuate RNA silencing and thus counter host defense. Interacts with host JAZ.

Its subcellular location is the host nucleus. In terms of biological role, multifunctional protein that plays two independent roles: viral suppressor of host RNAi (VSR) and viral inducer of host attractiveness to insect vectors (VIA). Acts as a suppressor of RNA-mediated gene silencing, also known as post-transcriptional gene silencing (PTGS), a mechanism of plant viral defense that limits the accumulation of viral RNAs. May directly interfere with mobile silencing signaling. Also inhibits signal transduction by the phytohormone jasmonate, making the infected plant more attractive to aphids, which are the second host to play a role as a dissemination vector. Acts by binding to and inhibiting JAZ degradation in the host. The protein is Suppressor of silencing 2b of Cucurbita pepo (Vegetable marrow).